The sequence spans 1562 residues: Cell surface antigen I/II (1562 aa).

An N-terminal signal peptide occupies residues 1-38 (MKVKKTYGFRKSKISKTLCGAVLGTVAAVSVAGQKVFA). The segment covering 42 to 54 (TTTSDVDTKVVGT) has biased composition (low complexity). Positions 42-91 (TTTSDVDTKVVGTQTGNPATNLPEAQGSASKEAEQSQNQAGETNGSIPVE) are disordered. The helical stretch occupies residues 60–551 (ATNLPEAQGS…SKAKYDQKIL (492 aa)). Over residues 76–87 (QSQNQAGETNGS) the composition is skewed to polar residues. Ag I/II A repeat units follow at residues 147–221 (KKTT…QKTN), 222–303 (AANQ…QEAN), 304–385 (AANE…KKAN), and 386–467 (AANE…QKDL). Disordered regions lie at residues 824–973 (VPKV…PTDP) and 1482–1509 (SNTV…RTST). The span at 943 to 958 (PTPPTPTPDQPEPNKP) shows a compositional bias: pro residues. Over residues 1500-1509 (QDPSSPRTST) the composition is skewed to low complexity. The LPXTG sorting signal motif lies at 1529–1533 (LPNTG). A Pentaglycyl murein peptidoglycan amidated threonine modification is found at T1532. The propeptide at 1533–1562 (GVTNNAYMPLLGIIGLVTSFSLLGLKAKKD) is removed by sortase.

It belongs to the antigen I/II family. Post-translationally, detected as a 185 kDa cell surface protein, but also as 2 proteins in S.mutans culture supernatants of about 150 kDa (antigen I) and 50 kDa (antigen II); antigen II is only seen after proteolysis. Antigen I and II have the same N-terminus but different C-termini.

It localises to the secreted. The protein localises to the cell wall. In terms of biological role, surface protein antigen implicated in dental caries. The protein is Cell surface antigen I/II of Streptococcus mutans serotype c (strain ATCC 700610 / UA159).